Consider the following 288-residue polypeptide: UTP--glucose-1-phosphate uridylyltransferase (288 aa).

This sequence belongs to the UDPGP type 2 family.

It carries out the reaction alpha-D-glucose 1-phosphate + UTP + H(+) = UDP-alpha-D-glucose + diphosphate. It functions in the pathway glycolipid metabolism; diglucosyl-diacylglycerol biosynthesis. Functionally, catalyzes the formation of UDP-glucose from glucose-1-phosphate and UTP. This is an intermediate step in the biosynthesis of diglucosyl-diacylglycerol (Glc2-DAG), i.e. the predominant glycolipid found in the S.aureus membrane, which is also used as a membrane anchor for lipoteichoic acid (LTA). The polypeptide is UTP--glucose-1-phosphate uridylyltransferase (gtaB) (Staphylococcus aureus (strain MRSA252)).